Consider the following 507-residue polypeptide: Alkyl hydroperoxide reductase subunit F (507 aa).

207–222 (DVLIVGGGPASGSAAI) provides a ligand contact to FAD. Cys-335 and Cys-338 are joined by a disulfide. 347–361 (DVAVIGGGNSGVEAA) lines the NAD(+) pocket. 467 to 477 (TNVPGIFAAGD) is a binding site for FAD.

It belongs to the class-II pyridine nucleotide-disulfide oxidoreductase family. In terms of assembly, homodimer. The cofactor is FAD.

Functionally, serves to protect the cell against DNA damage by alkyl hydroperoxides. It can use either NADH or NADPH as electron donor for direct reduction of redox dyes or of alkyl hydroperoxides when combined with the AhpC protein. The chain is Alkyl hydroperoxide reductase subunit F (ahpF) from Staphylococcus aureus (strain Mu50 / ATCC 700699).